We begin with the raw amino-acid sequence, 159 residues long: Phosphopantetheine adenylyltransferase (159 aa).

Ser9 is a substrate binding site. Residues 9–10 (SF) and His17 each bind ATP. Substrate-binding residues include Lys41, Ile73, and Lys87. ATP contacts are provided by residues 88–90 (GLR), Glu98, and 122–128 (WGYVSSS).

It belongs to the bacterial CoaD family. In terms of assembly, homohexamer. Mg(2+) serves as cofactor.

Its subcellular location is the cytoplasm. The enzyme catalyses (R)-4'-phosphopantetheine + ATP + H(+) = 3'-dephospho-CoA + diphosphate. Its pathway is cofactor biosynthesis; coenzyme A biosynthesis; CoA from (R)-pantothenate: step 4/5. Functionally, reversibly transfers an adenylyl group from ATP to 4'-phosphopantetheine, yielding dephospho-CoA (dPCoA) and pyrophosphate. The sequence is that of Phosphopantetheine adenylyltransferase from Nocardioides sp. (strain ATCC BAA-499 / JS614).